The chain runs to 98 residues: Flagellar hook-basal body complex protein FliE (98 aa).

Positions 22 to 56 (KTDNATGAGNTFTQMLDSMSDTQSNAQTSVSNLLT) are disordered. Polar residues predominate over residues 23-56 (TDNATGAGNTFTQMLDSMSDTQSNAQTSVSNLLT).

Belongs to the FliE family.

The protein resides in the bacterial flagellum basal body. In Listeria innocua serovar 6a (strain ATCC BAA-680 / CLIP 11262), this protein is Flagellar hook-basal body complex protein FliE.